The primary structure comprises 589 residues: MTISTDRPAPVSSWRTYRRLLAFAKPYRLLLVAALIAALIEAAGTTGFLALMKPITDETFIYKNAEVSRWLPVQIILLFVVRGVAGYITDMAMGKSARSIARDLRIKVMAKYLRLPGSRFDSEPVPSMLIRLGSDSDQVAQAAVDAVKVMIQQSLQVIGALALMLWHSWQVTLTILVLAPVLAWVMDKVARRYRRISHSIQESGAQLLQAADQTLSSHQEVKIYGAQQTEMERYGALANRNLRLAMKVESTRGISTATVQMIGAIGLSALLFVAGAQALAGRLTAGDFVVLMTSMLTIIPGLKQLTNVQNMVQRGLASAERLFSVLDSPDEPDQGTVPLTRAKGLIEFRDVTARYPGQVNPALADVSFVAQPGTVTAIVGRSGSGKSSLIKLIPRFYEAEAGQILLDGHPVQAYALADLRRQIALVGQQVMLFDGSIADNVAFGEMRNADAGQLERAILGANAMEFVAQLPEGLQSHVGTKGGRLSGGQRQRLAIARAMLKDAPVLILDEATAALDNESERLVQDALHKLMPDRTTLVIAHRLSTIEHADQVLVMDQGRIVERGTHHQLLAQGGLYSHLHGMQFRERQA.

Helical transmembrane passes span 29-49 (LLLV…TGFL), 70-90 (WLPV…YITD), 157-177 (VIGA…TILV), 261-281 (MIGA…ALAG), and 283-303 (LTAG…PGLK). The 283-residue stretch at 32–314 (VAALIAALIE…LTNVQNMVQR (283 aa)) folds into the ABC transmembrane type-1 domain. Positions 346 to 582 (IEFRDVTARY…GGLYSHLHGM (237 aa)) constitute an ABC transporter domain. 380–387 (GRSGSGKS) lines the ATP pocket.

The protein belongs to the ABC transporter superfamily. Lipid exporter (TC 3.A.1.106) family. In terms of assembly, homodimer.

It is found in the cell inner membrane. It carries out the reaction ATP + H2O + lipid A-core oligosaccharideSide 1 = ADP + phosphate + lipid A-core oligosaccharideSide 2.. Its function is as follows. Involved in lipopolysaccharide (LPS) biosynthesis. Translocates lipid A-core from the inner to the outer leaflet of the inner membrane. Transmembrane domains (TMD) form a pore in the inner membrane and the ATP-binding domain (NBD) is responsible for energy generation. In Xanthomonas euvesicatoria pv. vesicatoria (strain 85-10) (Xanthomonas campestris pv. vesicatoria), this protein is ATP-dependent lipid A-core flippase.